A 314-amino-acid polypeptide reads, in one-letter code: Testisin (314 aa).

The signal sequence occupies residues 1–19 (MGARGALLLALLLARAGLR). A propeptide spanning residues 20-41 (KPESQEAAPLSGPCGRRVITSR) is cleaved from the precursor. Intrachain disulfides connect Cys-33/Cys-157 and Cys-67/Cys-83. The Peptidase S1 domain maps to 42 to 286 (IVGGEDAELG…HFEWIQKLMA (245 aa)). Catalysis depends on charge relay system residues His-82 and Asp-137. Residues Asn-167 and Asn-200 are each glycosylated (N-linked (GlcNAc...) asparagine). 3 disulfide bridges follow: Cys-171–Cys-244, Cys-204–Cys-223, and Cys-234–Cys-262. The active-site Charge relay system is the Ser-238. N-linked (GlcNAc...) asparagine glycosylation occurs at Asn-273. Ser-288 is lipidated: GPI-anchor amidated serine. Positions 289–314 (GMSQPDPSWPLLFFPLLWALPLLGPV) are cleaved as a propeptide — removed in mature form.

Belongs to the peptidase S1 family. Expressed predominantly in premeiotic testicular germ cells, mostly late pachytene and diplotene spermatocytes.

It localises to the cell membrane. Functionally, could regulate proteolytic events associated with testicular germ cell maturation. In Homo sapiens (Human), this protein is Testisin (PRSS21).